A 535-amino-acid chain; its full sequence is Beta-amylase (535 aa).

A propeptide spans 1–2 (removed in mature form); it reads ME. Val-3 is subject to N-acetylvaline. Substrate contacts are provided by Asp-51, His-91, and Asp-99. Glu-184 functions as the Proton donor in the catalytic mechanism. Substrate is bound by residues Lys-293, His-298, and Thr-340. Glu-378 acts as the Proton acceptor in catalysis. Residues 379 to 380 and Arg-418 contribute to the substrate site; that span reads NA. Tandem repeats lie at residues 489 to 499, 500 to 510, and 511 to 521. The interval 489–532 is 4 X 11 AA tandem repeats; it reads GPTGGMGGQAEGPTCGMGGQVKGPTGGMGGQAEDPTSGMGGELP. Residues 490–535 constitute a propeptide, removed in mature form; it reads PTGGMGGQAEGPTCGMGGQVKGPTGGMGGQAEDPTSGMGGELPATM. The tract at residues 513–535 is disordered; that stretch reads TGGMGGQAEDPTSGMGGELPATM. The 4; approximate repeat unit spans residues 522–532; that stretch reads DPTSGMGGELP.

It belongs to the glycosyl hydrolase 14 family. Monomer. In terms of tissue distribution, endosperm.

The catalysed reaction is Hydrolysis of (1-&gt;4)-alpha-D-glucosidic linkages in polysaccharides so as to remove successive maltose units from the non-reducing ends of the chains.. Its function is as follows. Catalyzes the liberation of maltose from 1,4-alpha-D glucans. This Hordeum vulgare subsp. spontaneum (Wild barley) protein is Beta-amylase.